The sequence spans 131 residues: Small ribosomal subunit protein uS11 (131 aa).

Belongs to the universal ribosomal protein uS11 family. As to quaternary structure, part of the 30S ribosomal subunit. Interacts with proteins S7 and S18. Binds to IF-3.

Its function is as follows. Located on the platform of the 30S subunit, it bridges several disparate RNA helices of the 16S rRNA. Forms part of the Shine-Dalgarno cleft in the 70S ribosome. The chain is Small ribosomal subunit protein uS11 from Saccharophagus degradans (strain 2-40 / ATCC 43961 / DSM 17024).